The sequence spans 1402 residues: DNA-directed RNA polymerase subunit beta' (1402 aa).

Zn(2+) is bound by residues C71, C73, C86, and C89. D462, D464, and D466 together coordinate Mg(2+). 4 residues coordinate Zn(2+): C811, C885, C892, and C895. Positions 1379–1402 are disordered; sequence RKGTGAGSANQMLQDMTDQVPAAE. The span at 1385–1395 shows a compositional bias: polar residues; it reads GSANQMLQDMT.

This sequence belongs to the RNA polymerase beta' chain family. As to quaternary structure, the RNAP catalytic core consists of 2 alpha, 1 beta, 1 beta' and 1 omega subunit. When a sigma factor is associated with the core the holoenzyme is formed, which can initiate transcription. Mg(2+) serves as cofactor. Requires Zn(2+) as cofactor.

It catalyses the reaction RNA(n) + a ribonucleoside 5'-triphosphate = RNA(n+1) + diphosphate. Functionally, DNA-dependent RNA polymerase catalyzes the transcription of DNA into RNA using the four ribonucleoside triphosphates as substrates. In Agrobacterium fabrum (strain C58 / ATCC 33970) (Agrobacterium tumefaciens (strain C58)), this protein is DNA-directed RNA polymerase subunit beta'.